We begin with the raw amino-acid sequence, 729 residues long: Fatty acid oxidation complex subunit alpha (729 aa).

Positions 1-189 are enoyl-CoA hydratase/isomerase; that stretch reads MLYKGDTLYV…KIGLIDGIVK (189 aa). Aspartate 296 contacts substrate. The tract at residues 311–729 is 3-hydroxyacyl-CoA dehydrogenase; sequence EMPKQAAVLG…ARPVGALKTA (419 aa). NAD(+)-binding positions include methionine 324, aspartate 343, 400–402, lysine 407, and serine 429; that span reads VVE. The active-site For 3-hydroxyacyl-CoA dehydrogenase activity is the histidine 450. Asparagine 453 contacts NAD(+). Asparagine 500 and tyrosine 660 together coordinate substrate. Positions 708 to 729 are disordered; that stretch reads RHNEPYYPPVEPARPVGALKTA.

This sequence in the N-terminal section; belongs to the enoyl-CoA hydratase/isomerase family. It in the C-terminal section; belongs to the 3-hydroxyacyl-CoA dehydrogenase family. Heterotetramer of two alpha chains (FadB) and two beta chains (FadA).

It carries out the reaction a (3S)-3-hydroxyacyl-CoA + NAD(+) = a 3-oxoacyl-CoA + NADH + H(+). The enzyme catalyses a (3S)-3-hydroxyacyl-CoA = a (2E)-enoyl-CoA + H2O. It catalyses the reaction a 4-saturated-(3S)-3-hydroxyacyl-CoA = a (3E)-enoyl-CoA + H2O. The catalysed reaction is (3S)-3-hydroxybutanoyl-CoA = (3R)-3-hydroxybutanoyl-CoA. It carries out the reaction a (3Z)-enoyl-CoA = a 4-saturated (2E)-enoyl-CoA. The enzyme catalyses a (3E)-enoyl-CoA = a 4-saturated (2E)-enoyl-CoA. The protein operates within lipid metabolism; fatty acid beta-oxidation. Involved in the aerobic and anaerobic degradation of long-chain fatty acids via beta-oxidation cycle. Catalyzes the formation of 3-oxoacyl-CoA from enoyl-CoA via L-3-hydroxyacyl-CoA. It can also use D-3-hydroxyacyl-CoA and cis-3-enoyl-CoA as substrate. In Enterobacter sp. (strain 638), this protein is Fatty acid oxidation complex subunit alpha.